The chain runs to 332 residues: Tyrosine--tRNA ligase (332 aa).

L-tyrosine is bound by residues Tyr32, Tyr156, Gln160, Asp163, and Gln178. Residues 219 to 223 (KMSKS) carry the 'KMSKS' region motif. Lys222 contributes to the ATP binding site.

It belongs to the class-I aminoacyl-tRNA synthetase family. TyrS type 4 subfamily. In terms of assembly, homodimer.

It localises to the cytoplasm. It catalyses the reaction tRNA(Tyr) + L-tyrosine + ATP = L-tyrosyl-tRNA(Tyr) + AMP + diphosphate + H(+). Its function is as follows. Catalyzes the attachment of tyrosine to tRNA(Tyr) in a two-step reaction: tyrosine is first activated by ATP to form Tyr-AMP and then transferred to the acceptor end of tRNA(Tyr). The protein is Tyrosine--tRNA ligase of Thermoplasma acidophilum (strain ATCC 25905 / DSM 1728 / JCM 9062 / NBRC 15155 / AMRC-C165).